We begin with the raw amino-acid sequence, 733 residues long: Alpha,alpha-trehalose-phosphate synthase [UDP-forming] A (733 aa).

The protein in the N-terminal section; belongs to the glycosyltransferase 20 family. This sequence in the C-terminal section; belongs to the trehalose phosphatase family.

The catalysed reaction is D-glucose 6-phosphate + UDP-alpha-D-glucose = alpha,alpha-trehalose 6-phosphate + UDP + H(+). In terms of biological role, synthesizes trehalose 6-phosphate, the precursor for the production of trehalose, the main carbohydrate storage reserve of the dormant spore. Trehalose accumulates in both prestalk and prespore cells and then is rapidly metabolized during terminal differentiation of stalk cells, while being stored in spores, where it serves as the principal energy and carbon source for germination. In Dictyostelium discoideum (Social amoeba), this protein is Alpha,alpha-trehalose-phosphate synthase [UDP-forming] A (tpsA).